The following is a 968-amino-acid chain: RNA polymerase-associated protein RapA (968 aa).

One can recognise a Helicase ATP-binding domain in the interval 164–334 (DVGRRHAPRV…FARLRLLDPN (171 aa)). 177 to 184 (DEVGLGKT) contributes to the ATP binding site. Positions 280 to 283 (DEAH) match the DEAH box motif. Residues 490–662 (RVEWLMGYLT…YLASPDQTEG (173 aa)) enclose the Helicase C-terminal domain.

The protein belongs to the SNF2/RAD54 helicase family. RapA subfamily. As to quaternary structure, interacts with the RNAP. Has a higher affinity for the core RNAP than for the holoenzyme. Its ATPase activity is stimulated by binding to RNAP.

Functionally, transcription regulator that activates transcription by stimulating RNA polymerase (RNAP) recycling in case of stress conditions such as supercoiled DNA or high salt concentrations. Probably acts by releasing the RNAP, when it is trapped or immobilized on tightly supercoiled DNA. Does not activate transcription on linear DNA. Probably not involved in DNA repair. This chain is RNA polymerase-associated protein RapA, found in Escherichia coli O1:K1 / APEC.